Consider the following 314-residue polypeptide: MKRFKNIAVYGGGSFGTSLAAIAARVCENVTLFLRDEEIAKEITDKKTNTKYLGNIKLPSNLQATTNLDKIKDFELIIIAVPSYAFDEAIKLLKTHISNDNILLIATKGFARNPTELFSDRLKTLLSNNPIAFLSGPNLAKDLAKGLPASATIASLDIDLANKISYNLSSEAFVASTINDVITLQVAGALKNIFAIKSGIDMAKEQGENAKATLIVSALKEIAILSKALGGMKNNMDILLEAGVVGDLVLTCYSRSSRNTKFGYEFGISKDKQKFLQEYKELVEGREAIKLVLELIERYDLDMPIVSSLGNVIR.

NADPH contacts are provided by Ser14, Phe15, Arg35, and Lys108. Sn-glycerol 3-phosphate contacts are provided by Lys108 and Gly136. Ala140 contacts NADPH. Residues Lys191, Asp247, Ser257, Arg258, and Asn259 each coordinate sn-glycerol 3-phosphate. Residue Lys191 is the Proton acceptor of the active site. Position 258 (Arg258) interacts with NADPH. Positions 282 and 284 each coordinate NADPH.

It belongs to the NAD-dependent glycerol-3-phosphate dehydrogenase family.

It is found in the cytoplasm. The catalysed reaction is sn-glycerol 3-phosphate + NAD(+) = dihydroxyacetone phosphate + NADH + H(+). It catalyses the reaction sn-glycerol 3-phosphate + NADP(+) = dihydroxyacetone phosphate + NADPH + H(+). The protein operates within membrane lipid metabolism; glycerophospholipid metabolism. Its function is as follows. Catalyzes the reduction of the glycolytic intermediate dihydroxyacetone phosphate (DHAP) to sn-glycerol 3-phosphate (G3P), the key precursor for phospholipid synthesis. The protein is Glycerol-3-phosphate dehydrogenase [NAD(P)+] of Rickettsia bellii (strain OSU 85-389).